Here is a 171-residue protein sequence, read N- to C-terminus: ATP synthase subunit b (171 aa).

The helical transmembrane segment at 32 to 52 (FFAVLLIFLIVLGVIAKWVVP) threads the bilayer.

This sequence belongs to the ATPase B chain family. In terms of assembly, F-type ATPases have 2 components, F(1) - the catalytic core - and F(0) - the membrane proton channel. F(1) has five subunits: alpha(3), beta(3), gamma(1), delta(1), epsilon(1). F(0) has three main subunits: a(1), b(2) and c(10-14). The alpha and beta chains form an alternating ring which encloses part of the gamma chain. F(1) is attached to F(0) by a central stalk formed by the gamma and epsilon chains, while a peripheral stalk is formed by the delta and b chains.

It localises to the cell membrane. Functionally, f(1)F(0) ATP synthase produces ATP from ADP in the presence of a proton or sodium gradient. F-type ATPases consist of two structural domains, F(1) containing the extramembraneous catalytic core and F(0) containing the membrane proton channel, linked together by a central stalk and a peripheral stalk. During catalysis, ATP synthesis in the catalytic domain of F(1) is coupled via a rotary mechanism of the central stalk subunits to proton translocation. Component of the F(0) channel, it forms part of the peripheral stalk, linking F(1) to F(0). This chain is ATP synthase subunit b, found in Mycolicibacterium gilvum (strain PYR-GCK) (Mycobacterium gilvum (strain PYR-GCK)).